Reading from the N-terminus, the 409-residue chain is Dual-specificity RNA methyltransferase RlmN (409 aa).

E121 functions as the Proton acceptor in the catalytic mechanism. The 250-residue stretch at 127–376 (EEGRGTLCIS…IRTPRGRDIL (250 aa)) folds into the Radical SAM core domain. The cysteines at positions 134 and 379 are disulfide-linked. 3 residues coordinate [4Fe-4S] cluster: C141, C145, and C148. Residues 205-206 (GE), S237, 259-261 (SLH), and N336 each bind S-adenosyl-L-methionine. Catalysis depends on C379, which acts as the S-methylcysteine intermediate.

This sequence belongs to the radical SAM superfamily. RlmN family. The cofactor is [4Fe-4S] cluster.

It is found in the cytoplasm. It catalyses the reaction adenosine(2503) in 23S rRNA + 2 reduced [2Fe-2S]-[ferredoxin] + 2 S-adenosyl-L-methionine = 2-methyladenosine(2503) in 23S rRNA + 5'-deoxyadenosine + L-methionine + 2 oxidized [2Fe-2S]-[ferredoxin] + S-adenosyl-L-homocysteine. The enzyme catalyses adenosine(37) in tRNA + 2 reduced [2Fe-2S]-[ferredoxin] + 2 S-adenosyl-L-methionine = 2-methyladenosine(37) in tRNA + 5'-deoxyadenosine + L-methionine + 2 oxidized [2Fe-2S]-[ferredoxin] + S-adenosyl-L-homocysteine. Its function is as follows. Specifically methylates position 2 of adenine 2503 in 23S rRNA and position 2 of adenine 37 in tRNAs. m2A2503 modification seems to play a crucial role in the proofreading step occurring at the peptidyl transferase center and thus would serve to optimize ribosomal fidelity. The protein is Dual-specificity RNA methyltransferase RlmN of Rhizobium etli (strain ATCC 51251 / DSM 11541 / JCM 21823 / NBRC 15573 / CFN 42).